We begin with the raw amino-acid sequence, 276 residues long: UPF0276 protein AM1_3026 (276 aa).

Belongs to the UPF0276 family.

This chain is UPF0276 protein AM1_3026, found in Acaryochloris marina (strain MBIC 11017).